Here is a 347-residue protein sequence, read N- to C-terminus: DNA damage tolerance protein RHC31 (347 aa).

The residue at position 9 (serine 9) is a Phosphoserine. Lysine 35 participates in a covalent cross-link: Glycyl lysine isopeptide (Lys-Gly) (interchain with G-Cter in SUMO).

Its function is as follows. Could be involved in a ubiquitin-related process important for DNA damage tolerance. This chain is DNA damage tolerance protein RHC31 (AOS1), found in Saccharomyces cerevisiae (strain ATCC 204508 / S288c) (Baker's yeast).